Reading from the N-terminus, the 265-residue chain is 3-methyl-2-oxobutanoate hydroxymethyltransferase (265 aa).

Mg(2+) is bound by residues Asp45 and Asp84. 3-methyl-2-oxobutanoate-binding positions include 45-46 (DS), Asp84, and Lys112. Glu114 is a Mg(2+) binding site. The active-site Proton acceptor is Glu181.

This sequence belongs to the PanB family. As to quaternary structure, homodecamer; pentamer of dimers. The cofactor is Mg(2+).

It is found in the cytoplasm. The enzyme catalyses 3-methyl-2-oxobutanoate + (6R)-5,10-methylene-5,6,7,8-tetrahydrofolate + H2O = 2-dehydropantoate + (6S)-5,6,7,8-tetrahydrofolate. It functions in the pathway cofactor biosynthesis; (R)-pantothenate biosynthesis; (R)-pantoate from 3-methyl-2-oxobutanoate: step 1/2. Functionally, catalyzes the reversible reaction in which hydroxymethyl group from 5,10-methylenetetrahydrofolate is transferred onto alpha-ketoisovalerate to form ketopantoate. In Yersinia pseudotuberculosis serotype IB (strain PB1/+), this protein is 3-methyl-2-oxobutanoate hydroxymethyltransferase.